The chain runs to 408 residues: Protein SPATA31F3 (408 aa).

A helical transmembrane segment spans residues 11–31 (VGYPFYTYGSIIIIALIIWQV). The segment at 51 to 71 (QKVKQRAKEKTPRARRHSRKE) is disordered. Position 152 is a phosphoserine (Ser-152). Disordered stretches follow at residues 297-316 (TKTK…MKGA) and 351-408 (LPLS…SASS). Polar residues predominate over residues 351 to 392 (LPLSSGSSKRSPLLTCATQPENPSHVSVSTSAEGTCLPQEST).

The protein belongs to the SPATA31 family.

The protein resides in the membrane. The polypeptide is Protein SPATA31F3 (SPATA31F3) (Bos taurus (Bovine)).